Here is a 211-residue protein sequence, read N- to C-terminus: Minor capsid protein VP2 (211 aa).

It belongs to the norovirus VP2 family. Homooligomer. The portal-like structure consists in 12 copies of VP2. Interacts with capsid protein VP1.

The protein localises to the virion. Its subcellular location is the host cytoplasm. Its function is as follows. Minor structural protein that forms a portal-like structure at a unique three-fold axis of symmetry, following binding to the host receptor. The channel formed by VP2 may allow the delivery of the viral genome through the host endosomal membrane. This chain is Minor capsid protein VP2, found in Homo sapiens (Human).